A 518-amino-acid polypeptide reads, in one-letter code: Glutamate--cysteine ligase (518 aa).

The protein belongs to the glutamate--cysteine ligase type 1 family. Type 1 subfamily.

The enzyme catalyses L-cysteine + L-glutamate + ATP = gamma-L-glutamyl-L-cysteine + ADP + phosphate + H(+). Its pathway is sulfur metabolism; glutathione biosynthesis; glutathione from L-cysteine and L-glutamate: step 1/2. The polypeptide is Glutamate--cysteine ligase (Shigella sonnei (strain Ss046)).